The sequence spans 189 residues: Parkinson disease protein 7 homolog (189 aa).

Ala-2 is modified (N-acetylalanine). S-palmitoyl cysteine attachment occurs at residues Cys-46 and Cys-53. Tyr-67 carries the post-translational modification Phosphotyrosine. Cys-106 serves as the catalytic Nucleophile. Position 106 is a cysteine sulfinic acid (-SO2H); alternate (Cys-106). Cys-106 is lipidated: S-palmitoyl cysteine; alternate. His-126 is a catalytic residue. Residue Lys-130 forms a Glycyl lysine isopeptide (Lys-Gly) (interchain with G-Cter in SUMO) linkage. An N6-acetyllysine modification is found at Lys-148. An N6-succinyllysine modification is found at Lys-182.

This sequence belongs to the peptidase C56 family. As to quaternary structure, homodimer. Binds EFCAB6/DJBP and PIAS2. Part of a ternary complex containing PARK7, EFCAB6/DJBP and AR. Interacts (via N-terminus) with OTUD7B. Interacts with BBS1, HIPK1, CLCF1 and MTERF. Forms a complex with PINK1 and PRKN. Interacts (via C-terminus) with NCF1; the interaction is enhanced by LPS and modulates NCF1 phosphorylation and membrane translocation. Interacts with NENF. Deglycase activity does not require glutathione as a cofactor, however, glycated glutathione constitutes a PARK7 substrate. serves as cofactor. Post-translationally, sumoylated on Lys-130 by PIAS2 or PIAS4; which is essential for cell-growth promoting activity and transforming activity. Undergoes cleavage of a C-terminal peptide and subsequent activation of protease activity in response to oxidative stress.

It is found in the cell membrane. The protein resides in the cytoplasm. It localises to the nucleus. The protein localises to the membrane raft. Its subcellular location is the mitochondrion. It is found in the endoplasmic reticulum. It catalyses the reaction N(omega)-(1-hydroxy-2-oxopropyl)-L-arginyl-[protein] + H2O = lactate + L-arginyl-[protein] + H(+). It carries out the reaction N(6)-(1-hydroxy-2-oxopropyl)-L-lysyl-[protein] + H2O = lactate + L-lysyl-[protein] + H(+). The enzyme catalyses S-(1-hydroxy-2-oxopropyl)-L-cysteinyl-[protein] + H2O = lactate + L-cysteinyl-[protein] + H(+). The catalysed reaction is N(omega)-(1-hydroxy-2-oxoethyl)-L-arginyl-[protein] + H2O = L-arginyl-[protein] + glycolate + H(+). It catalyses the reaction N(6)-(1-hydroxy-2-oxoethyl)-L-lysyl-[protein] + H2O = glycolate + L-lysyl-[protein] + H(+). It carries out the reaction S-(1-hydroxy-2-oxoethyl)-L-cysteinyl-[protein] + H2O = glycolate + L-cysteinyl-[protein] + H(+). The enzyme catalyses N(2)-(1-hydroxy-2-oxopropyl)-dGTP + H2O = lactate + dGTP + H(+). The catalysed reaction is N(2)-(1-hydroxy-2-oxopropyl)-GTP + H2O = lactate + GTP + H(+). It catalyses the reaction N(2)-(1-hydroxy-2-oxopropyl)-GDP + H2O = lactate + GDP + H(+). It carries out the reaction N(2)-(1-hydroxy-2-oxopropyl)-GMP + H2O = lactate + GMP + H(+). The enzyme catalyses N(2)-(1-hydroxy-2-oxoethyl)-dGTP + H2O = dGTP + glycolate + H(+). The catalysed reaction is N(2)-(1-hydroxy-2-oxoethyl)-GTP + H2O = glycolate + GTP + H(+). It catalyses the reaction N(2)-(1-hydroxy-2-oxoethyl)-GDP + H2O = glycolate + GDP + H(+). It carries out the reaction N(2)-(1-hydroxy-2-oxoethyl)-GMP + H2O = glycolate + GMP + H(+). The enzyme catalyses an N(2)-(1-hydroxy-2-oxopropyl)-guanosine in RNA + H2O = a guanosine in RNA + lactate + H(+). The catalysed reaction is an N(2)-(1-hydroxy-2-oxopropyl)-2'-deoxyguanosine in DNA + H2O = a 2'-deoxyguanosine in DNA + lactate + H(+). It catalyses the reaction an N(2)-(1-hydroxy-2-oxoethyl)-guanosine in RNA + H2O = a guanosine in RNA + glycolate + H(+). It carries out the reaction an N(2)-(1-hydroxy-2-oxoethyl)-2'-deoxyguanosine in DNA + H2O = a 2'-deoxyguanosine in DNA + glycolate + H(+). In terms of biological role, multifunctional protein with controversial molecular function which plays an important role in cell protection against oxidative stress and cell death acting as oxidative stress sensor and redox-sensitive chaperone and protease. It is involved in neuroprotective mechanisms like the stabilization of NFE2L2 and PINK1 proteins, male fertility as a positive regulator of androgen signaling pathway as well as cell growth and transformation through, for instance, the modulation of NF-kappa-B signaling pathway. Has been described as a protein and nucleotide deglycase that catalyzes the deglycation of the Maillard adducts formed between amino groups of proteins or nucleotides and reactive carbonyl groups of glyoxals. But this function is rebuted by other works. As a protein deglycase, repairs methylglyoxal- and glyoxal-glycated proteins, and releases repaired proteins and lactate or glycolate, respectively. Deglycates cysteine, arginine and lysine residues in proteins, and thus reactivates these proteins by reversing glycation by glyoxals. Acts on early glycation intermediates (hemithioacetals and aminocarbinols), preventing the formation of advanced glycation endproducts (AGE) that cause irreversible damage. Also functions as a nucleotide deglycase able to repair glycated guanine in the free nucleotide pool (GTP, GDP, GMP, dGTP) and in DNA and RNA. Is thus involved in a major nucleotide repair system named guanine glycation repair (GG repair), dedicated to reversing methylglyoxal and glyoxal damage via nucleotide sanitization and direct nucleic acid repair. Protects histones from adduction by methylglyoxal, controls the levels of methylglyoxal-derived argininine modifications on chromatin. Able to remove the glycations and restore histone 3, histone glycation disrupts both local and global chromatin architecture by altering histone-DNA interactions as well as histone acetylation and ubiquitination levels. Displays a very low glyoxalase activity that may reflect its deglycase activity. Eliminates hydrogen peroxide and protects cells against hydrogen peroxide-induced cell death. Required for correct mitochondrial morphology and function as well as for autophagy of dysfunctional mitochondria. Plays a role in regulating expression or stability of the mitochondrial uncoupling proteins SLC25A14 and SLC25A27 in dopaminergic neurons of the substantia nigra pars compacta and attenuates the oxidative stress induced by calcium entry into the neurons via L-type channels during pacemaking. Regulates astrocyte inflammatory responses, may modulate lipid rafts-dependent endocytosis in astrocytes and neuronal cells. In pancreatic islets, involved in the maintenance of mitochondrial reactive oxygen species (ROS) levels and glucose homeostasis in an age- and diet dependent manner. Protects pancreatic beta cells from cell death induced by inflammatory and cytotoxic setting. Binds to a number of mRNAs containing multiple copies of GG or CC motifs and partially inhibits their translation but dissociates following oxidative stress. Metal-binding protein able to bind copper as well as toxic mercury ions, enhances the cell protection mechanism against induced metal toxicity. In macrophages, interacts with the NADPH oxidase subunit NCF1 to direct NADPH oxidase-dependent ROS production, and protects against sepsis. In Chlorocebus aethiops (Green monkey), this protein is Parkinson disease protein 7 homolog.